A 128-amino-acid polypeptide reads, in one-letter code: uncharacterized protein (128 aa).

A disordered region spans residues 25–61 (LPNRLPEGSTVGPKPDSSWEAGSQGNWGLTSSGAGQD). A compositionally biased stretch (polar residues) spans 44 to 61 (EAGSQGNWGLTSSGAGQD).

This is an uncharacterized protein from Homo sapiens (Human).